A 979-amino-acid chain; its full sequence is Receptor-type tyrosine-protein phosphatase-like N (979 aa).

The N-terminal stretch at 1–34 (MRLPGRPGGPGGSGGLRVLLCLLLLGSRPGGCNA) is a signal peptide. The RESP18 homology domain stretch occupies residues 35 to 131 (ISAHGCLFDR…HPRDRSGLVP (97 aa)). The Lumenal portion of the chain corresponds to 35–575 (ISAHGCLFDR…RPAHSTSPMR (541 aa)). Residues Cys53 and Cys62 are joined by a disulfide bond. Basic and acidic residues predominate over residues 113-127 (IPRLRPPEPHPRDRS). Disordered regions lie at residues 113–171 (IPRL…GAGS), 248–272 (GSKG…PAQL), 285–332 (SQVP…EQPD), and 391–466 (EQVQ…STRP). A phosphoserine mark is found at Ser308 and Ser309. Residues 400–409 (EPPPPMPSLP) show a composition bias toward pro residues. The segment at 449-575 (SPLGQNQPTM…RPAHSTSPMR (127 aa)) is sufficient for dimerization of proICA512. Polar residues predominate over residues 451-466 (LGQNQPTMAGQPSTRP). Asn506 and Asn524 each carry an N-linked (GlcNAc...) asparagine glycan. A helical membrane pass occupies residues 576 to 600 (SVLLTLVALAGVAGLLVALAVALCV). The interval 601 to 732 (RQHARQRDKE…PNTCATAQGE (132 aa)) is sufficient for dimerization of proICA512. The Cytoplasmic segment spans residues 601–979 (RQHARQRDKE…VNAILKALPQ (379 aa)). The disordered stretch occupies residues 643–680 (NRAEGPPEPSRVSSVSSQFSDAAQASPSSHSSTPSWCE). Over residues 652 to 677 (SRVSSVSSQFSDAAQASPSSHSSTPS) the composition is skewed to low complexity. Residues 709 to 969 (LAKEWQALCA…EFALTAVAEE (261 aa)) enclose the Tyrosine-protein phosphatase domain. Residue Lys754 forms a Glycyl lysine isopeptide (Lys-Gly) (interchain with G-Cter in SUMO) linkage.

This sequence belongs to the protein-tyrosine phosphatase family. Receptor class 8 subfamily. Homodimer; shown for the unprocessed protein (proICA512) in the endoplasmic reticulum and resolved during protein maturation as ICA512-TMF seems to be predominantly monomeric in secretory granules; however, ICA512-CCF interacts with ICA512-TMF disrupting the ICA512-TMF:SNTB2 complex. The isolated lumenal RESP18 homology domain has been shown to form disulfide-linked homooligomers. Interacts (via cytoplasmic domain) with phosphorylated SNTB2; this protects PTPRN against cleavage by CAPN1 to produce ICA512-CCF. Dephosphorylation of SNTB2 upon insulin stimulation disrupts the interaction and results in PTPRN cleavage. Interacts with SNX19. ICA512-CCF interacts with PIAS4; in the nucleus. Interacts with STAT5B (phosphorylated); down-regulated by ICA512-CCF sumoylation; ICA512-CCF prevents STAT5B dephosphorylation; ICA512-CCF mediates interaction of STAT5B with PIAS4. Interacts (via RESP18 homology domain) with insulin and proinsulin. Interacts with PTPRN2, PTPRA and PTPRE. Post-translationally, N-glycosylated. O-glycosylated. In terms of processing, subject to proteolytic cleavage at multiple sites. Subject to cleavage on a pair of basic residues. On exocytosis of secretory granules in pancreatic beta-cells ICA512-TMF is transiently inserted in the plasma-membrane and cleaved by mu-type calpain CPN1 to yield ICA512-CCF. Post-translationally, sumoylated at two sites including Lys-754. Sumoylation decreases interaction with STAT5. Detected in pituitary (at protein level).

The protein resides in the membrane. Its subcellular location is the cytoplasmic vesicle. It is found in the secretory vesicle membrane. The protein localises to the perikaryon. It localises to the cell projection. The protein resides in the axon. Its subcellular location is the synapse. It is found in the cell membrane. The protein localises to the endosome. It localises to the nucleus. In terms of biological role, plays a role in vesicle-mediated secretory processes. Required for normal accumulation of secretory vesicles in hippocampus, pituitary and pancreatic islets. Required for the accumulation of normal levels of insulin-containing vesicles and preventing their degradation. Plays a role in insulin secretion in response to glucose stimuli. Required for normal accumulation of the neurotransmitters norepinephrine, dopamine and serotonin in the brain. In females, but not in males, required for normal accumulation and secretion of pituitary hormones, such as luteinizing hormone (LH) and follicle-stimulating hormone (FSH). Required to maintain normal levels of renin expression and renin release. Seems to lack intrinsic enzyme activity. May regulate catalytic active protein-tyrosine phosphatases such as PTPRA through dimerization. Its function is as follows. ICA512-TMF regulates dynamics and exocytosis of insulin secretory granules (SGs); binding of ICA512-TMF to SNTB2/beta-2-syntrophin is proposed to restrain SGs mobility and exocytosis by tethering them to the actin cytoskeleton depending on UTRN; the function is inhibited by cytoplasmic ICA512-CFF dimerizing with ICA512-TMF and displacing SNTB2. Functionally, ICA512-CCF translocated to the nucleus promotes expression of insulin and other granule-related genes; the function implicates binding to and regulating activity of STAT5B probably by preventing its dephosphorylation and potentially by inducing its sumoylation by recruiting PIAS4. Enhances pancreatic beta-cell proliferation by converging with signaling by STAT5B and STAT3. ICA512-CCF located in the cytoplasm regulates dynamics and exocytosis of insulin secretory granules (SGs) by dimerizing with ICA512-TMF and displacing SNTB2 thus enhancing SGs mobility and exocytosis. The chain is Receptor-type tyrosine-protein phosphatase-like N (PTPRN) from Bos taurus (Bovine).